A 372-amino-acid polypeptide reads, in one-letter code: Ribosomal RNA small subunit methyltransferase H (372 aa).

Residues 78-80 (GGH), Asp97, Tyr124, Asp148, and Gln155 contribute to the S-adenosyl-L-methionine site.

Belongs to the methyltransferase superfamily. RsmH family.

Its subcellular location is the cytoplasm. It catalyses the reaction cytidine(1402) in 16S rRNA + S-adenosyl-L-methionine = N(4)-methylcytidine(1402) in 16S rRNA + S-adenosyl-L-homocysteine + H(+). Its function is as follows. Specifically methylates the N4 position of cytidine in position 1402 (C1402) of 16S rRNA. The sequence is that of Ribosomal RNA small subunit methyltransferase H from Mycobacterium leprae (strain Br4923).